The primary structure comprises 760 residues: Probable myosin-binding protein 4 (760 aa).

A helical membrane pass occupies residues 26-46 (WFLILLMFIDALLSYLLVWFA). Disordered stretches follow at residues 161–189 (SRGR…SLKK), 247–273 (SEKR…QPVL), 292–311 (SMLG…VKAK), and 348–595 (EAEV…KHSA). The span at 352–366 (SGSSSPSGGEFLSPS) shows a compositional bias: low complexity. The segment covering 371–383 (ASREIRIQEHDDS) has biased composition (basic and acidic residues). Residues 385–394 (DFSQNITSSA) are compositionally biased toward polar residues. A coiled-coil region spans residues 388–416 (QNITSSAMEIEEFEAAIEQKESDHMDVSG). Positions 404 to 413 (IEQKESDHMD) are enriched in basic and acidic residues. Composition is skewed to acidic residues over residues 446 to 458 (LEQE…ESEV) and 517 to 526 (EEDVDNEESE). Composition is skewed to basic and acidic residues over residues 537-550 (VKEE…HGDH) and 562-580 (SKEE…KITE). Positions 611–709 (SLVEVLKQQL…DLEMELEYYR (99 aa)) constitute a GTD-binding domain. The interval 725–760 (GILGNTEETNVTSPTDETSIKDSTDTKLTGSPSAEN) is disordered. Polar residues-rich tracts occupy residues 730–741 (TEETNVTSPTDE) and 750–760 (TKLTGSPSAEN).

It localises to the endomembrane system. Functionally, membrane-anchored myosin receptors that define a distinct, plant-specific transport vesicle compartment. This Arabidopsis thaliana (Mouse-ear cress) protein is Probable myosin-binding protein 4.